Consider the following 1693-residue polypeptide: 1-phosphatidylinositol 4,5-bisphosphate phosphodiesterase eta-1 (1693 aa).

Residues 20–128 form the PH domain; sequence SVMQSGTQMI…WITGLKYLMA (109 aa). EF-hand domains are found at residues 142 to 177, 178 to 214, and 226 to 246; these read THDQ…LNVN, LPRR…MSLR, and DKKD…EQKM. 4 residues coordinate Ca(2+): Asp-155, Asn-157, Asp-159, and Glu-166. The PI-PLC X-box domain occupies 299-444; that stretch reads QDMDQPLCNY…LKGKILVKGK (146 aa). The active site involves His-314. Ca(2+) is bound by residues Asn-315, Glu-344, and Asp-346. The active site involves His-358. Glu-393 contacts Ca(2+). Substrate contacts are provided by Lys-442 and Lys-444. The tract at residues 526-585 is disordered; it reads LNAHLKQSPDVKESGKKSHGRSLMTNFGKHKKTTKSRSKSYSTDDEEDTQQSTGKEGGQL. Residues 532–541 are compositionally biased toward basic and acidic residues; that stretch reads QSPDVKESGK. Positions 553 to 563 are enriched in basic residues; it reads GKHKKTTKSRS. Residues 601–714 enclose the PI-PLC Y-box domain; the sequence is LSDLVVYTNS…GYVLKPQQMC (114 aa). Residues Ser-627 and Arg-654 each contribute to the substrate site. The 129-residue stretch at 715 to 843 folds into the C2 domain; the sequence is KGTFNPFSGD…PGYRHVYLEG (129 aa). The Ca(2+) site is built by Ile-758, Asp-760, Asp-784, Asp-813, His-814, and Asp-815. The segment covering 992-1005 has biased composition (basic and acidic residues); it reads IEGKENSLAEDKDG. Disordered regions lie at residues 992 to 1014, 1052 to 1089, 1300 to 1329, and 1578 to 1613; these read IEGK…ASIK, TGEQ…PKQH, LESN…ETLK, and LSSR…GAGV. The segment covering 1065–1086 has biased composition (polar residues); sequence RTTSNATSNCQENPCPSKSLSP. Residues 1592 to 1601 are compositionally biased toward basic and acidic residues; sequence RAKEKQEANK.

Ca(2+) is required as a cofactor. As to expression, expressed in brain and to a lower extent in lung. In brain, it is found in cerebrum, cerebellum and spinal cord. In embryo expressed in the notochord, developing spinal cord (in a ventral to dorsal gradient), dorsal root ganglia, cerebellum and dermatomyosome.

The protein localises to the cytoplasm. It localises to the membrane. The catalysed reaction is a 1,2-diacyl-sn-glycero-3-phospho-(1D-myo-inositol-4,5-bisphosphate) + H2O = 1D-myo-inositol 1,4,5-trisphosphate + a 1,2-diacyl-sn-glycerol + H(+). Its function is as follows. The production of the second messenger molecules diacylglycerol (DAG) and inositol 1,4,5-trisphosphate (IP3) is mediated by calcium-activated phosphatidylinositol-specific phospholipase C enzymes. This is 1-phosphatidylinositol 4,5-bisphosphate phosphodiesterase eta-1 from Homo sapiens (Human).